A 489-amino-acid polypeptide reads, in one-letter code: Adenosylhomocysteinase (489 aa).

Substrate-binding residues include threonine 68, aspartate 151, and glutamate 213. 214–216 (TTT) contributes to the NAD(+) binding site. The substrate site is built by lysine 243 and aspartate 247. NAD(+)-binding positions include asparagine 248, 277 to 282 (GYGDVG), glutamate 300, asparagine 335, 356 to 358 (IGH), and asparagine 403.

Belongs to the adenosylhomocysteinase family. NAD(+) is required as a cofactor.

It is found in the cytoplasm. The enzyme catalyses S-adenosyl-L-homocysteine + H2O = L-homocysteine + adenosine. It participates in amino-acid biosynthesis; L-homocysteine biosynthesis; L-homocysteine from S-adenosyl-L-homocysteine: step 1/1. In terms of biological role, may play a key role in the regulation of the intracellular concentration of adenosylhomocysteine. The chain is Adenosylhomocysteinase from Mycobacterium sp. (strain KMS).